The sequence spans 96 residues: Putative septation protein SpoVG (96 aa).

This sequence belongs to the SpoVG family.

In terms of biological role, could be involved in septation. This is Putative septation protein SpoVG from Phytoplasma australiense.